The primary structure comprises 264 residues: Thymidylate synthase (264 aa).

Residues arginine 21 and 126–127 (RR) contribute to the dUMP site. The active-site Nucleophile is cysteine 146. DUMP-binding positions include 166–169 (RSAD), asparagine 177, and 207–209 (HLY). Aspartate 169 lines the (6R)-5,10-methylene-5,6,7,8-tetrahydrofolate pocket. Alanine 263 is a binding site for (6R)-5,10-methylene-5,6,7,8-tetrahydrofolate.

Belongs to the thymidylate synthase family. Bacterial-type ThyA subfamily. As to quaternary structure, homodimer.

It is found in the cytoplasm. The catalysed reaction is dUMP + (6R)-5,10-methylene-5,6,7,8-tetrahydrofolate = 7,8-dihydrofolate + dTMP. It participates in pyrimidine metabolism; dTTP biosynthesis. Functionally, catalyzes the reductive methylation of 2'-deoxyuridine-5'-monophosphate (dUMP) to 2'-deoxythymidine-5'-monophosphate (dTMP) while utilizing 5,10-methylenetetrahydrofolate (mTHF) as the methyl donor and reductant in the reaction, yielding dihydrofolate (DHF) as a by-product. This enzymatic reaction provides an intracellular de novo source of dTMP, an essential precursor for DNA biosynthesis. The protein is Thymidylate synthase of Bradyrhizobium sp. (strain ORS 278).